The following is a 380-amino-acid chain: Zinc finger protein neuro-d4 (380 aa).

Residues 132–164 form a disordered region; sequence ALLDCQKPPPGDFAHDAEGDEMEDDAPRRKNKA. Residues 190–213 form a C2H2-type zinc finger; sequence YVCDICGKRYKNRPGLSYHYTHTH. 2 consecutive PHD-type zinc fingers follow at residues 262–321 and 318–368; these read EGPC…CKNC and CKNC…CLRQ. Zn(2+) is bound by residues Cys265, Cys268, Cys286, Cys289, His294, Cys297, Cys315, Cys318, Cys321, Cys324, Cys336, Cys339, His344, Cys347, Cys362, and Cys365.

The protein belongs to the requiem/DPF family. In terms of assembly, component of neuron-specific chromatin remodeling complex (nBAF complex), a subfamily of ATP-dependent SWI/SNF chromatin remodeling complexes.

It localises to the cytoplasm. Its subcellular location is the nucleus. Its function is as follows. May have an important role in developing neurons by participating in regulation of cell survival, possibly as a neurospecific transcription factor. Belongs to the neuron-specific chromatin remodeling complex (nBAF complex) and plays a role in neural development. The sequence is that of Zinc finger protein neuro-d4 from Gallus gallus (Chicken).